We begin with the raw amino-acid sequence, 435 residues long: Legumain (435 aa).

The N-terminal stretch at 1-17 is a signal peptide; sequence MTWRVAVLLSLVLGAGA. The N-linked (GlcNAc...) asparagine glycan is linked to Asn93. The active site involves His150. A glycan (N-linked (GlcNAc...) asparagine) is linked at Asn169. Catalysis depends on Cys191, which acts as the Nucleophile. Residues Asn265 and Asn274 are each glycosylated (N-linked (GlcNAc...) asparagine). Residues 326 to 435 constitute a propeptide that is removed on maturation; sequence DVKESQNLIG…AMDKVCLSHY (110 aa). Intrachain disulfides connect Cys380/Cys414 and Cys392/Cys431.

It belongs to the peptidase C13 family. In terms of assembly, homodimer before autocatalytic removal of the propeptide. Monomer after autocatalytic processing. May interact with integrins. Post-translationally, glycosylated. In terms of processing, activated by autocatalytic processing at pH 4. In terms of tissue distribution, detected in kidney proximal tubules (at protein level). Ubiquitous. Particularly abundant in kidney and placenta.

The protein resides in the lysosome. The enzyme catalyses Hydrolysis of proteins and small molecule substrates at -Asn-|-Xaa- bonds.. With respect to regulation, inhibited by cystatin-C. Has a strict specificity for hydrolysis of asparaginyl bonds. Can also cleave aspartyl bonds slowly, especially under acidic conditions. Involved in the processing of proteins for MHC class II antigen presentation in the lysosomal/endosomal system. Also involved in MHC class I antigen presentation in cross-presenting dendritic cells by mediating cleavage and maturation of Perforin-2 (MPEG1), thereby promoting antigen translocation in the cytosol. Required for normal lysosomal protein degradation in renal proximal tubules. Required for normal degradation of internalized EGFR. Plays a role in the regulation of cell proliferation via its role in EGFR degradation. This chain is Legumain (Lgmn), found in Mus musculus (Mouse).